Here is a 403-residue protein sequence, read N- to C-terminus: Cysteine desulfurase IscS (403 aa).

Pyridoxal 5'-phosphate contacts are provided by residues 75–76 (AT), N155, Q183, and 203–205 (SAH). K206 carries the N6-(pyridoxal phosphate)lysine modification. A pyridoxal 5'-phosphate-binding site is contributed by T243. Catalysis depends on C328, which acts as the Cysteine persulfide intermediate. C328 is a binding site for [2Fe-2S] cluster.

It belongs to the class-V pyridoxal-phosphate-dependent aminotransferase family. NifS/IscS subfamily. Homodimer. Forms a heterotetramer with IscU, interacts with other sulfur acceptors. Requires pyridoxal 5'-phosphate as cofactor.

The protein localises to the cytoplasm. It carries out the reaction (sulfur carrier)-H + L-cysteine = (sulfur carrier)-SH + L-alanine. It functions in the pathway cofactor biosynthesis; iron-sulfur cluster biosynthesis. Master enzyme that delivers sulfur to a number of partners involved in Fe-S cluster assembly, tRNA modification or cofactor biosynthesis. Catalyzes the removal of elemental sulfur atoms from cysteine to produce alanine. Functions as a sulfur delivery protein for Fe-S cluster synthesis onto IscU, an Fe-S scaffold assembly protein, as well as other S acceptor proteins. This Psychromonas ingrahamii (strain DSM 17664 / CCUG 51855 / 37) protein is Cysteine desulfurase IscS.